The following is a 260-amino-acid chain: Alpha-acetolactate decarboxylase (260 aa).

Belongs to the alpha-acetolactate decarboxylase family.

The catalysed reaction is (2S)-2-acetolactate + H(+) = (R)-acetoin + CO2. It participates in polyol metabolism; (R,R)-butane-2,3-diol biosynthesis; (R,R)-butane-2,3-diol from pyruvate: step 2/3. In terms of biological role, converts acetolactate into acetoin. In Methylococcus capsulatus (strain ATCC 33009 / NCIMB 11132 / Bath), this protein is Alpha-acetolactate decarboxylase (budA).